The primary structure comprises 282 residues: Protoheme IX farnesyltransferase (282 aa).

Transmembrane regions (helical) follow at residues 9–29 (LAKP…FLLA), 39–59 (LPLF…GCVF), 79–99 (LVTG…LLIL), 102–122 (LVLY…GFIV), 139–159 (VLGG…VVNI), 165–185 (LALF…IAML), 210–230 (IMLF…VLGS), 231–251 (ADLF…YKSI), and 261–281 (VFAK…CLTM).

Belongs to the UbiA prenyltransferase family. Protoheme IX farnesyltransferase subfamily.

It localises to the cell inner membrane. It catalyses the reaction heme b + (2E,6E)-farnesyl diphosphate + H2O = Fe(II)-heme o + diphosphate. It participates in porphyrin-containing compound metabolism; heme O biosynthesis; heme O from protoheme: step 1/1. Converts heme B (protoheme IX) to heme O by substitution of the vinyl group on carbon 2 of heme B porphyrin ring with a hydroxyethyl farnesyl side group. The protein is Protoheme IX farnesyltransferase of Francisella tularensis subsp. tularensis (strain FSC 198).